The sequence spans 1034 residues: Ubiquitin-like-specific protease 2 (1034 aa).

6 disordered regions span residues 1–42 (MSAR…FRKD), 71–110 (IELSDNDVDNNDEGEGVNSGCSDQDFEPLQSSPLKRHSSL), 388–419 (SHAVSQLRRSNRFKDVSDPANSNSNSEFDDAT), 731–800 (IDQS…PIRH), 841–960 (GVSS…DSLG), and 983–1034 (SSPT…DEDP). Low complexity predominate over residues 19–33 (SSRASSPRSSASLPP). Residues 74-85 (SDNDVDNNDEGE) show a composition bias toward acidic residues. The segment covering 743 to 756 (TSEPPCSRSSSIST) has biased composition (low complexity). At Ser-788 the chain carries Phosphoserine. Composition is skewed to polar residues over residues 845-856 (PIKNDQALSSTH), 876-904 (QLSSHVQSLSTDSMERQSSPNNTNIVISD), and 912-923 (GVNSESKNTSGI). Ser-903 carries the phosphoserine modification. Ser-983 and Ser-984 each carry phosphoserine. A compositionally biased stretch (polar residues) spans 992–1017 (TSATSKGSNAQLLSNYGDENNQSQDS).

It belongs to the peptidase C48 family.

In terms of biological role, insertion mutation in SMT4 confers temperature and benomyl sensitivity; high copy suppressor of a temperature sensitive mutation in MIF2. In Saccharomyces cerevisiae (strain ATCC 204508 / S288c) (Baker's yeast), this protein is Ubiquitin-like-specific protease 2 (ULP2).